A 379-amino-acid polypeptide reads, in one-letter code: Alanine racemase (379 aa).

The Proton acceptor; specific for D-alanine role is filled by K37. K37 is modified (N6-(pyridoxal phosphate)lysine). A substrate-binding site is contributed by R137. Residue Y269 is the Proton acceptor; specific for L-alanine of the active site. M317 contacts substrate.

This sequence belongs to the alanine racemase family. The cofactor is pyridoxal 5'-phosphate.

The catalysed reaction is L-alanine = D-alanine. The protein operates within amino-acid biosynthesis; D-alanine biosynthesis; D-alanine from L-alanine: step 1/1. Catalyzes the interconversion of L-alanine and D-alanine. May also act on other amino acids. The polypeptide is Alanine racemase (alr) (Geobacter sp. (strain M21)).